A 320-amino-acid polypeptide reads, in one-letter code: MMRVVFIGTGDFGVPSLEAIALDGRYTIPAVVTQADKPLGRQKEVIPSPIKRTALKHHIWVFQPENINSAGSIQQIQFLKPDLLVVCDYGQILSKAVLEIPSIGALNIHGSLLPKYRGASPIQAAIMNRDKETGVTVIWMDEGIDTGDILMSDKLLVRSTDTAETLHHRLAELGARLIIQSLEAIRAGKAPRIPQNNALASYAKKIKKEQALIDWTKDRHEIDAMIRAFNPWPVAFTTVWIGGEKKILKIFKVIISHRAKGMPGEVVRIDRHGILVAAGRSGGLLLREVQLEGRKRMHAADFARGARLAIGTVLGQKDEQ.

111-114 (SLLP) contributes to the (6S)-5,6,7,8-tetrahydrofolate binding site.

The protein belongs to the Fmt family.

The enzyme catalyses L-methionyl-tRNA(fMet) + (6R)-10-formyltetrahydrofolate = N-formyl-L-methionyl-tRNA(fMet) + (6S)-5,6,7,8-tetrahydrofolate + H(+). Attaches a formyl group to the free amino group of methionyl-tRNA(fMet). The formyl group appears to play a dual role in the initiator identity of N-formylmethionyl-tRNA by promoting its recognition by IF2 and preventing the misappropriation of this tRNA by the elongation apparatus. The sequence is that of Methionyl-tRNA formyltransferase from Methylacidiphilum infernorum (isolate V4) (Methylokorus infernorum (strain V4)).